The following is a 428-amino-acid chain: C4-dicarboxylate transport protein 1 (428 aa).

A run of 8 helical transmembrane segments spans residues 5–27, 42–64, 77–99, 150–167, 188–210, 225–247, 314–336, and 351–373; these read FYKI…GHFE, IQLI…IAGM, ALLY…GHIF, ILQI…LSAM, IVHV…TIGK, TFYL…LTGF, IFIS…LAVA, and FITL…VLIL.

The protein belongs to the dicarboxylate/amino acid:cation symporter (DAACS) (TC 2.A.23) family.

Its subcellular location is the cell inner membrane. Its function is as follows. Responsible for the transport of dicarboxylates such as succinate, fumarate, and malate from the periplasm across the membrane. The polypeptide is C4-dicarboxylate transport protein 1 (dctA1) (Ralstonia nicotianae (strain ATCC BAA-1114 / GMI1000) (Ralstonia solanacearum)).